A 104-amino-acid chain; its full sequence is Larval cuticle protein 65Ab1 (104 aa).

The first 18 residues, 1–18 (MKFLIVFVALFAMAVARP), serve as a signal peptide directing secretion. One can recognise a Chitin-binding type R&amp;R domain in the interval 32–102 (PEKWSSDVET…PQGAHLPVAP (71 aa)).

Its function is as follows. Component of the cuticle of the larva. This Drosophila melanogaster (Fruit fly) protein is Larval cuticle protein 65Ab1.